A 463-amino-acid polypeptide reads, in one-letter code: Asparagine--tRNA ligase (463 aa).

It belongs to the class-II aminoacyl-tRNA synthetase family. In terms of assembly, homodimer.

The protein resides in the cytoplasm. It carries out the reaction tRNA(Asn) + L-asparagine + ATP = L-asparaginyl-tRNA(Asn) + AMP + diphosphate + H(+). The sequence is that of Asparagine--tRNA ligase from Clostridium kluyveri (strain ATCC 8527 / DSM 555 / NBRC 12016 / NCIMB 10680 / K1).